The following is a 199-amino-acid chain: Shikimate kinase (199 aa).

Position 12-17 (12-17 (GAGKST)) interacts with ATP. Ser-16 provides a ligand contact to Mg(2+). Positions 34, 58, and 80 each coordinate substrate. Arg-117 is a binding site for ATP. Arg-136 serves as a coordination point for substrate. The disordered stretch occupies residues 174 to 199 (VSGGDRKSSEAERSGAPLRKSSEVVK). A compositionally biased stretch (basic and acidic residues) spans 177-186 (GDRKSSEAER).

Belongs to the shikimate kinase family. Monomer. Mg(2+) is required as a cofactor.

The protein resides in the cytoplasm. It catalyses the reaction shikimate + ATP = 3-phosphoshikimate + ADP + H(+). The protein operates within metabolic intermediate biosynthesis; chorismate biosynthesis; chorismate from D-erythrose 4-phosphate and phosphoenolpyruvate: step 5/7. In terms of biological role, catalyzes the specific phosphorylation of the 3-hydroxyl group of shikimic acid using ATP as a cosubstrate. The sequence is that of Shikimate kinase from Mycobacterium leprae (strain TN).